Here is a 310-residue protein sequence, read N- to C-terminus: 4-hydroxy-3-methylbut-2-enyl diphosphate reductase (310 aa).

C13 is a binding site for [4Fe-4S] cluster. Residues H42 and H75 each contribute to the (2E)-4-hydroxy-3-methylbut-2-enyl diphosphate site. Positions 42 and 75 each coordinate dimethylallyl diphosphate. Isopentenyl diphosphate contacts are provided by H42 and H75. Residue C97 participates in [4Fe-4S] cluster binding. H125 contacts (2E)-4-hydroxy-3-methylbut-2-enyl diphosphate. Residue H125 coordinates dimethylallyl diphosphate. H125 contacts isopentenyl diphosphate. E127 serves as the catalytic Proton donor. T165 is a binding site for (2E)-4-hydroxy-3-methylbut-2-enyl diphosphate. C195 is a binding site for [4Fe-4S] cluster. S223, S224, N225, and S267 together coordinate (2E)-4-hydroxy-3-methylbut-2-enyl diphosphate. Dimethylallyl diphosphate is bound by residues S223, S224, N225, and S267. Isopentenyl diphosphate contacts are provided by S223, S224, N225, and S267.

This sequence belongs to the IspH family. [4Fe-4S] cluster serves as cofactor.

It catalyses the reaction isopentenyl diphosphate + 2 oxidized [2Fe-2S]-[ferredoxin] + H2O = (2E)-4-hydroxy-3-methylbut-2-enyl diphosphate + 2 reduced [2Fe-2S]-[ferredoxin] + 2 H(+). It carries out the reaction dimethylallyl diphosphate + 2 oxidized [2Fe-2S]-[ferredoxin] + H2O = (2E)-4-hydroxy-3-methylbut-2-enyl diphosphate + 2 reduced [2Fe-2S]-[ferredoxin] + 2 H(+). Its pathway is isoprenoid biosynthesis; dimethylallyl diphosphate biosynthesis; dimethylallyl diphosphate from (2E)-4-hydroxy-3-methylbutenyl diphosphate: step 1/1. It functions in the pathway isoprenoid biosynthesis; isopentenyl diphosphate biosynthesis via DXP pathway; isopentenyl diphosphate from 1-deoxy-D-xylulose 5-phosphate: step 6/6. In terms of biological role, catalyzes the conversion of 1-hydroxy-2-methyl-2-(E)-butenyl 4-diphosphate (HMBPP) into a mixture of isopentenyl diphosphate (IPP) and dimethylallyl diphosphate (DMAPP). Acts in the terminal step of the DOXP/MEP pathway for isoprenoid precursor biosynthesis. The sequence is that of 4-hydroxy-3-methylbut-2-enyl diphosphate reductase from Chlamydia pneumoniae (Chlamydophila pneumoniae).